The following is a 1231-amino-acid chain: Multifunctional 2-oxoglutarate metabolism enzyme (1231 aa).

Residues Met-1–Ser-41 are 2-oxoglutarate dehydrogenase E1, N-terminal part. A compositionally biased stretch (basic and acidic residues) spans Asp-24–Leu-37. Residues Asp-24–Thr-56 form a disordered region. The segment at Pro-42–Ala-88 is linker. The interval Leu-89–Ser-337 is succinyltransferase E2. His-316 functions as the Proton acceptor; for succinyltransferase activity in the catalytic mechanism. The segment at Asp-338 to Gly-1231 is 2-oxoglutarate dehydrogenase E1, C-terminal part. Arg-542 contributes to the thiamine diphosphate binding site. Residues His-581 and Ser-606 each contribute to the 2-oxoglutarate site. Thiamine diphosphate contacts are provided by Ser-606, Leu-608, Asp-649, Ala-650, Ala-651, and Asn-682. Asp-649 lines the Mg(2+) pocket. Residues Asn-682 and Ile-684 each contribute to the Mg(2+) site. Residues Asp-787–His-817 are a coiled coil. Residue His-1024 participates in 2-oxoglutarate binding. Positions 1042, 1058, 1093, 1096, 1146, 1153, and 1154 each coordinate acetyl-CoA.

It belongs to the 2-oxoacid dehydrogenase family. Kgd subfamily. Homodimer. The 2-oxoglutarate dehydrogenase (ODH) complex contains multiple copies of three enzymatic components: 2-oxoglutarate dehydrogenase (E1), dihydrolipoamide succinyltransferase (E2) and lipoamide dehydrogenase (E3). Requires Mg(2+) as cofactor. The cofactor is thiamine diphosphate.

The catalysed reaction is glyoxylate + 2-oxoglutarate + H(+) = 2-hydroxy-3-oxoadipate + CO2. It catalyses the reaction 2-oxoglutarate + H(+) = succinate semialdehyde + CO2. It carries out the reaction N(6)-[(R)-lipoyl]-L-lysyl-[protein] + 2-oxoglutarate + H(+) = N(6)-[(R)-S(8)-succinyldihydrolipoyl]-L-lysyl-[protein] + CO2. The enzyme catalyses N(6)-[(R)-dihydrolipoyl]-L-lysyl-[protein] + succinyl-CoA = N(6)-[(R)-S(8)-succinyldihydrolipoyl]-L-lysyl-[protein] + CoA. The protein operates within carbohydrate metabolism; tricarboxylic acid cycle; succinate from 2-oxoglutarate (transferase route): step 1/2. Its pathway is carbohydrate metabolism; tricarboxylic acid cycle; succinyl-CoA from 2-oxoglutarate (dehydrogenase route): step 1/1. With respect to regulation, alpha-ketoglutarate dehydrogenase and decarboxylase activities are inhibited by unphosphorylated GarA, and allosterically activated by acetyl-CoA, the main substrate of the TCA cycle. In terms of biological role, shows three enzymatic activities that share a first common step, the attack of thiamine-PP on 2-oxoglutarate (alpha-ketoglutarate, KG), leading to the formation of an enamine-thiamine-PP intermediate upon decarboxylation. Thus, displays KGD activity, catalyzing the decarboxylation from five-carbon 2-oxoglutarate to four-carbon succinate semialdehyde (SSA). Also catalyzes C-C bond formation between the activated aldehyde formed after decarboxylation of alpha-ketoglutarate and the carbonyl of glyoxylate (GLX), to yield 2-hydroxy-3-oxoadipate (HOA), which spontaneously decarboxylates to form 5-hydroxylevulinate (HLA). And is also a component of the 2-oxoglutarate dehydrogenase (ODH) complex, that catalyzes the overall conversion of 2-oxoglutarate to succinyl-CoA and CO(2). The KG decarboxylase and KG dehydrogenase reactions provide two alternative, tightly regulated, pathways connecting the oxidative and reductive branches of the TCA cycle. The sequence is that of Multifunctional 2-oxoglutarate metabolism enzyme (kgd) from Mycobacterium bovis (strain ATCC BAA-935 / AF2122/97).